The sequence spans 192 residues: Phosphoheptose isomerase (192 aa).

One can recognise an SIS domain in the interval 34–192 (VVDAYKAGNK…VERELFVKGK (159 aa)). 49–51 (NGG) contributes to the substrate binding site. 2 residues coordinate Zn(2+): H58 and E62. Substrate-binding positions include E62, 91–92 (ND), 117–119 (STS), S122, and Q169. Zn(2+)-binding residues include Q169 and H177.

Belongs to the SIS family. GmhA subfamily. Homotetramer. The cofactor is Zn(2+).

It is found in the cytoplasm. It catalyses the reaction 2 D-sedoheptulose 7-phosphate = D-glycero-alpha-D-manno-heptose 7-phosphate + D-glycero-beta-D-manno-heptose 7-phosphate. Its pathway is carbohydrate biosynthesis; D-glycero-D-manno-heptose 7-phosphate biosynthesis; D-glycero-alpha-D-manno-heptose 7-phosphate and D-glycero-beta-D-manno-heptose 7-phosphate from sedoheptulose 7-phosphate: step 1/1. In terms of biological role, catalyzes the isomerization of sedoheptulose 7-phosphate in D-glycero-D-manno-heptose 7-phosphate. The protein is Phosphoheptose isomerase of Citrifermentans bemidjiense (strain ATCC BAA-1014 / DSM 16622 / JCM 12645 / Bem) (Geobacter bemidjiensis).